Reading from the N-terminus, the 141-residue chain is Putative pre-16S rRNA nuclease (141 aa).

Belongs to the YqgF nuclease family.

It localises to the cytoplasm. Could be a nuclease involved in processing of the 5'-end of pre-16S rRNA. The sequence is that of Putative pre-16S rRNA nuclease from Chlorobium luteolum (strain DSM 273 / BCRC 81028 / 2530) (Pelodictyon luteolum).